A 1082-amino-acid chain; its full sequence is MVNGCRVRSNLLDIQRNSFRSFLKKGLVEELRKIKDIAHEGFRISFQTDNVKYKKPKISAEFALKNGETYSLSVHIPVEVTYNNMFLVRNKYILFAKIPLMTEKGTFIFNGNKRIMVNQIIRSPGVYFEKNRYNDSIFATLIPTFGSWLTFKIDQDEGIFVKVDKIKTAIPLINFLKCLGLSRKKFFLYLNDPIFIETLQESESYGIRLEFFEFYKIFFPNEVNVRFGNARKFLRSKFMDPRKYDLGEVGRFRVNTKIYRSEFFQSNRTLQPEDVLGIAHYLIELKKGMIPFDEIDDLKNKLVRSIGELLQSQFRIILNELESSLKEKLIFLYKNPSEKTFRLSRFFNSYFITNRIRKFFSVNPLSQLLDDTNSLSELTHKRKLSPFGPNGLNKERTKLDVREINTSQYGRVCPIETSEGKNAGLILSLAKDVRVDKYGFLESPFYKVLRGKIETNKGIYFISSAQEKYFTVAPFDVFRSSQSNLLDKNKLLGVKRSKIFSYSFSKNIDFISISTDQFTSLGTGLVPFLEHNDANRVLMGSNMQRQSLILLEKEVPFIKTGREALINRESDATVLAKSSGKVIYSSLKKIVIQEEEYCANIEFFNKNYSFFNLLGCLNEISQKNFKLIKKVNQKIYFLESPKKSNHGVYIQKIPIVHEGEWVRKGQIIADGMSTLRGGICLGKNVLVAYLGWEGYNFEDAVIISERLVFEDIFTSIHMKKFKTFIVNDEKKGENISMFIPNASLKTIKNLKNNGIIKIGSEIKAQDVLIGRIKVKLKNTPKNKMLIAFFGNKVRKDVSLRSPRSLVGIVTSVEILCKKSNCSVLIHVAEKRRIQIGDKIAGRHGNKGIISKIVPSIDMPFLPDGTPVDMILNPLGIPSRMNVGQVFESLLNLSSLFLKERYKIQPFDEVQTSMNSKSFVYKKLNEARKRTKKDWLFNPNYPGKAFLYDGRNCRPFDHPVAFGYAYILKLIHMVKDKIHARVTGPYSSVTQQPLRGKSKNGGQRFGEMEVWAIEGFGAAYLLQELLTIKSDDVLNRSEALFSLINGTYFSKPNIPEAFKLFILEMQSLCIDIKIFTNNYKKFD.

It belongs to the RNA polymerase beta chain family. In plastids the minimal PEP RNA polymerase catalytic core is composed of four subunits: alpha, beta, beta', and beta''. When a (nuclear-encoded) sigma factor is associated with the core the holoenzyme is formed, which can initiate transcription.

Its subcellular location is the plastid. The protein localises to the chloroplast. The enzyme catalyses RNA(n) + a ribonucleoside 5'-triphosphate = RNA(n+1) + diphosphate. In terms of biological role, DNA-dependent RNA polymerase catalyzes the transcription of DNA into RNA using the four ribonucleoside triphosphates as substrates. This is DNA-directed RNA polymerase subunit beta from Euglena gracilis.